We begin with the raw amino-acid sequence, 617 residues long: Acyl-CoA dehydrogenase family member 11 (617 aa).

The tract at residues Met-1–Lys-47 is disordered. Residues Ala-11–Ala-22 are compositionally biased toward low complexity. The span at Arg-23 to Thr-41 shows a compositional bias: polar residues. Residues Gln-206–Ser-215 and Phe-241–Ser-243 contribute to the FAD site. Ser-215 is a binding site for substrate. The substrate site is built by Ser-267 and Arg-334. Residues Arg-359, Gln-366–Trp-369, Glu-437, Gly-441, and Glu-464–Thr-466 each bind FAD.

The protein belongs to the acyl-CoA dehydrogenase family. Homotetramer; dimer of dimers.

Its function is as follows. Promotes adaption to elevated temperatures by regulating expression of the lipid desaturase, fat-7. Binds selectively and with high affinity to fatty acids with chain lengths from C10 to C12 and prevents them from activating fat-7 expression mediated by the nuclear hormone receptor nhr-49, leading to low levels of membrane lipid desaturation and membrane fluidity for adaption to heat. In Caenorhabditis elegans, this protein is Acyl-CoA dehydrogenase family member 11.